Here is a 346-residue protein sequence, read N- to C-terminus: Protein RecA (346 aa).

67–74 is an ATP binding site; the sequence is GPESSGKT.

Belongs to the RecA family.

The protein localises to the cytoplasm. Its function is as follows. Can catalyze the hydrolysis of ATP in the presence of single-stranded DNA, the ATP-dependent uptake of single-stranded DNA by duplex DNA, and the ATP-dependent hybridization of homologous single-stranded DNAs. It interacts with LexA causing its activation and leading to its autocatalytic cleavage. The polypeptide is Protein RecA (Mycobacterium ulcerans (strain Agy99)).